The sequence spans 88 residues: Small ribosomal subunit protein bS20 (88 aa).

The interval 1–27 (MANTKQAQKRARQAEQRRQHNASQRSM) is disordered.

Belongs to the bacterial ribosomal protein bS20 family.

Functionally, binds directly to 16S ribosomal RNA. In Chromohalobacter salexigens (strain ATCC BAA-138 / DSM 3043 / CIP 106854 / NCIMB 13768 / 1H11), this protein is Small ribosomal subunit protein bS20.